The sequence spans 391 residues: Lipid-A-disaccharide synthase (391 aa).

It belongs to the LpxB family.

It carries out the reaction a lipid X + a UDP-2-N,3-O-bis[(3R)-3-hydroxyacyl]-alpha-D-glucosamine = a lipid A disaccharide + UDP + H(+). Its pathway is bacterial outer membrane biogenesis; LPS lipid A biosynthesis. Condensation of UDP-2,3-diacylglucosamine and 2,3-diacylglucosamine-1-phosphate to form lipid A disaccharide, a precursor of lipid A, a phosphorylated glycolipid that anchors the lipopolysaccharide to the outer membrane of the cell. The chain is Lipid-A-disaccharide synthase from Azoarcus sp. (strain BH72).